The following is a 103-amino-acid chain: Probable protease inhibitor Egf0.4b (103 aa).

A signal peptide spans Met1–Thr22. The 53-residue stretch at Cys35–Cys87 folds into the TIL domain.

The protein belongs to the polydnaviridae EGF-like motif protein family.

This is Probable protease inhibitor Egf0.4b (O11) from Microplitis demolitor bracovirus (isolate Webb) (MdBV).